Here is a 549-residue protein sequence, read N- to C-terminus: FMRFamide receptor (549 aa).

Topologically, residues 1–117 are extracellular; sequence MSGTAVARLL…NNRIEFWVCG (117 aa). N59, N70, and N93 each carry an N-linked (GlcNAc...) asparagine glycan. The helical transmembrane segment at 118 to 138 threads the bilayer; it reads VLINIVGVLGILGNIISMIIL. Residues 139 to 158 are Cytoplasmic-facing; sequence SRPQMRSSINYLLTGLARCD. Residues 159–179 traverse the membrane as a helical segment; it reads TVLIITSILLFGIPSIYPYTG. Topologically, residues 180–181 are extracellular; the sequence is HF. A helical transmembrane segment spans residues 182 to 202; sequence FGYYNYVYPFISPAVFPIGMI. Over 203-238 the chain is Cytoplasmic; that stretch reads AQTASIYMTFTVTLERYVAVCHPLKARALCTYGRAK. A helical membrane pass occupies residues 239–259; that stretch reads IYFIVCVCFSLAYNMPRFWEV. The Extracellular segment spans residues 260–289; that stretch reads LTVTYPEPGKDVILHCVRPSRLRRSETYIN. The helical transmembrane segment at 290–310 threads the bilayer; it reads IYIHWCYLIVNYIIPFLTLAI. Topologically, residues 311 to 341 are cytoplasmic; the sequence is LNCLIYRQVKRANRERQRLSRSEKREIGLAT. Residues 342–362 traverse the membrane as a helical segment; sequence MLLCVVIVFFMLNFLPLVLNI. Residues 363–376 lie on the Extracellular side of the membrane; the sequence is SEAFYSTIDHKITK. The chain crosses the membrane as a helical span at residues 377 to 397; it reads ISNLLITINSSVNFLIYIIFG. At 398-549 the chain is on the cytoplasmic side; the sequence is EKFKRIFLLI…KKLGHVSSGF (152 aa).

This sequence belongs to the G-protein coupled receptor 1 family. Expressed in ovaries, heads and bodies. Expressed in dopaminergic neurons.

Its subcellular location is the cell membrane. In terms of biological role, a receptor for the FMRFamide peptides. Reacts with high affinity to FMRFamide and intrinsic FMRFamide-related peptides. By stimulating intracellular calcium signaling through the inositol 1,4,5-trisphosphate receptor, Itpr, in dopaminergic neurons, may be involved in the maintenance of neuronal excitability and in the regulation of flight bout duration. The protein is FMRFamide receptor of Drosophila melanogaster (Fruit fly).